Here is an 865-residue protein sequence, read N- to C-terminus: Probable beta-glucosidase J (865 aa).

Residue aspartate 233 is part of the active site. 4 N-linked (GlcNAc...) asparagine glycosylation sites follow: asparagine 330, asparagine 447, asparagine 503, and asparagine 764. A PA14 domain is found at 411–579; the sequence is TGQPGYTFRV…DTDTAIQQAV (169 aa).

The protein belongs to the glycosyl hydrolase 3 family.

The protein resides in the secreted. The catalysed reaction is Hydrolysis of terminal, non-reducing beta-D-glucosyl residues with release of beta-D-glucose.. The protein operates within glycan metabolism; cellulose degradation. Functionally, beta-glucosidases are one of a number of cellulolytic enzymes involved in the degradation of cellulosic biomass. Catalyzes the last step releasing glucose from the inhibitory cellobiose. This Aspergillus fumigatus (strain CBS 144.89 / FGSC A1163 / CEA10) (Neosartorya fumigata) protein is Probable beta-glucosidase J (bglJ).